Here is a 175-residue protein sequence, read N- to C-terminus: Ribosome maturation factor RimM (175 aa).

The PRC barrel domain maps to 96-175; that stretch reads EDEFYWRELF…RIEVDWDPGF (80 aa).

It belongs to the RimM family. In terms of assembly, binds ribosomal protein uS19.

Its subcellular location is the cytoplasm. In terms of biological role, an accessory protein needed during the final step in the assembly of 30S ribosomal subunit, possibly for assembly of the head region. Essential for efficient processing of 16S rRNA. May be needed both before and after RbfA during the maturation of 16S rRNA. It has affinity for free ribosomal 30S subunits but not for 70S ribosomes. In Aliivibrio fischeri (strain ATCC 700601 / ES114) (Vibrio fischeri), this protein is Ribosome maturation factor RimM.